Here is a 78-residue protein sequence, read N- to C-terminus: Mandibular organ-inhibiting hormone 1 (78 aa).

Intrachain disulfides connect Cys-7-Cys-44, Cys-24-Cys-40, and Cys-27-Cys-53.

The protein belongs to the arthropod CHH/MIH/GIH/VIH hormone family. As to expression, produced by the medulla terminalis X-organ in the eyestalks and transported to the sinus gland where it is stored and released.

The protein resides in the secreted. Its function is as follows. Represses the synthesis of methyl farnesoate, the precursor of insect juvenile hormone III in the mandibular organ. The chain is Mandibular organ-inhibiting hormone 1 from Cancer pagurus (Rock crab).